Here is a 270-residue protein sequence, read N- to C-terminus: MTEQYQHRARKRFGQNFLHDAGVIDRILRSIHAKPEDRMLEIGPGQGALTEGLLGSGAQLDVVELDKDLIPILNQQFAGKSNFNLHQGDALKFDFNTLGAAPGSLRVVGNLPYNISTPLIFHLLQNAGLIRDMHFMLQKEVVERLAAGPGGGDWGRLSIMVQYHCRVEHLFNVGPGAFNPPPKVDSAIVRLVPHAVLPHPAKDHRLLERIVREAFNQRRKTLRNTLKALLSSAEIEAAGVDGSLRPEQLDLAAFVRLADQLADQPKPATD.

Asn16, Leu18, Gly43, Glu64, Asp89, and Asn110 together coordinate S-adenosyl-L-methionine.

This sequence belongs to the class I-like SAM-binding methyltransferase superfamily. rRNA adenine N(6)-methyltransferase family. RsmA subfamily.

Its subcellular location is the cytoplasm. It carries out the reaction adenosine(1518)/adenosine(1519) in 16S rRNA + 4 S-adenosyl-L-methionine = N(6)-dimethyladenosine(1518)/N(6)-dimethyladenosine(1519) in 16S rRNA + 4 S-adenosyl-L-homocysteine + 4 H(+). Functionally, specifically dimethylates two adjacent adenosines (A1518 and A1519) in the loop of a conserved hairpin near the 3'-end of 16S rRNA in the 30S particle. May play a critical role in biogenesis of 30S subunits. This chain is Ribosomal RNA small subunit methyltransferase A, found in Pseudomonas fluorescens (strain ATCC BAA-477 / NRRL B-23932 / Pf-5).